The following is a 63-amino-acid chain: MTLFNSISSISNSTGISKESLIGNLNSNGIATGNISVSWLGGFDGCGGCGGGCGKNDFLYSSL.

It belongs to the UPF0512 family.

This is UPF0512 protein X from Dictyostelium discoideum (Social amoeba).